We begin with the raw amino-acid sequence, 179 residues long: Probable chorismate pyruvate-lyase (179 aa).

R82, L120, and E165 together coordinate substrate.

Belongs to the UbiC family.

It is found in the cytoplasm. It catalyses the reaction chorismate = 4-hydroxybenzoate + pyruvate. It participates in cofactor biosynthesis; ubiquinone biosynthesis. Functionally, removes the pyruvyl group from chorismate, with concomitant aromatization of the ring, to provide 4-hydroxybenzoate (4HB) for the ubiquinone pathway. In Vibrio vulnificus (strain CMCP6), this protein is Probable chorismate pyruvate-lyase.